The following is a 340-amino-acid chain: Putative UPF0607 protein ENSP00000332738 (340 aa).

Basic and acidic residues predominate over residues 75-90 (VRAEEPKEATEVKDQV). Disordered stretches follow at residues 75–130 (VRAE…NPRP) and 215–281 (GLLM…KLPC). The segment covering 91 to 126 (ETQGQEDNKTGPCSNGKAASTSRPLETQGNLTSSWY) has biased composition (polar residues). Residues 228-241 (PAALRSSRSSPPRA) are compositionally biased toward low complexity. Residues 242-251 (AGHRPRKRKL) are compositionally biased toward basic residues. The span at 254 to 266 (PPLQLQQTPPLQL) shows a compositional bias: low complexity.

The protein belongs to the UPF0607 family.

The chain is Putative UPF0607 protein ENSP00000332738 from Homo sapiens (Human).